We begin with the raw amino-acid sequence, 557 residues long: Urocanate hydratase (557 aa).

Residues 53-54, Gln131, 177-179, Glu197, 243-244, 264-268, 274-275, and Tyr323 each bind NAD(+); these read GG, GMG, NA, QTSAH, and YL. Cys411 is a catalytic residue. An NAD(+)-binding site is contributed by Gly493.

The protein belongs to the urocanase family. NAD(+) serves as cofactor.

Its subcellular location is the cytoplasm. The catalysed reaction is 4-imidazolone-5-propanoate = trans-urocanate + H2O. It functions in the pathway amino-acid degradation; L-histidine degradation into L-glutamate; N-formimidoyl-L-glutamate from L-histidine: step 2/3. In terms of biological role, catalyzes the conversion of urocanate to 4-imidazolone-5-propionate. This is Urocanate hydratase from Mesorhizobium japonicum (strain LMG 29417 / CECT 9101 / MAFF 303099) (Mesorhizobium loti (strain MAFF 303099)).